We begin with the raw amino-acid sequence, 149 residues long: Large ribosomal subunit protein bL9 (149 aa).

This sequence belongs to the bacterial ribosomal protein bL9 family.

Functionally, binds to the 23S rRNA. The sequence is that of Large ribosomal subunit protein bL9 (rplI) from Geobacillus stearothermophilus (Bacillus stearothermophilus).